We begin with the raw amino-acid sequence, 286 residues long: Release factor glutamine methyltransferase (286 aa).

Positions 136 and 179 each coordinate S-adenosyl-L-methionine. 179 to 182 (NPPY) contacts substrate.

Belongs to the protein N5-glutamine methyltransferase family. PrmC subfamily.

It catalyses the reaction L-glutaminyl-[peptide chain release factor] + S-adenosyl-L-methionine = N(5)-methyl-L-glutaminyl-[peptide chain release factor] + S-adenosyl-L-homocysteine + H(+). Methylates the class 1 translation termination release factors RF1/PrfA and RF2/PrfB on the glutamine residue of the universally conserved GGQ motif. The protein is Release factor glutamine methyltransferase of Borreliella burgdorferi (strain ATCC 35210 / DSM 4680 / CIP 102532 / B31) (Borrelia burgdorferi).